We begin with the raw amino-acid sequence, 278 residues long: S-adenosylmethionine decarboxylase proenzyme (278 aa).

The segment at 96–115 is disordered; it reads LTPESLTGESPGPLPGNKPS. The Schiff-base intermediate with substrate; via pyruvic acid role is filled by S126. At S126 the chain carries Pyruvic acid (Ser); by autocatalysis. H131 (proton acceptor; for processing activity) is an active-site residue. Catalysis depends on C154, which acts as the Proton donor; for catalytic activity.

This sequence belongs to the prokaryotic AdoMetDC family. Type 2 subfamily. As to quaternary structure, heterooctamer of four alpha and four beta chains arranged as a tetramer of alpha/beta heterodimers. Pyruvate is required as a cofactor. Post-translationally, is synthesized initially as an inactive proenzyme. Formation of the active enzyme involves a self-maturation process in which the active site pyruvoyl group is generated from an internal serine residue via an autocatalytic post-translational modification. Two non-identical subunits are generated from the proenzyme in this reaction, and the pyruvate is formed at the N-terminus of the alpha chain, which is derived from the carboxyl end of the proenzyme. The post-translation cleavage follows an unusual pathway, termed non-hydrolytic serinolysis, in which the side chain hydroxyl group of the serine supplies its oxygen atom to form the C-terminus of the beta chain, while the remainder of the serine residue undergoes an oxidative deamination to produce ammonia and the pyruvoyl group blocking the N-terminus of the alpha chain.

It catalyses the reaction S-adenosyl-L-methionine + H(+) = S-adenosyl 3-(methylsulfanyl)propylamine + CO2. Its pathway is amine and polyamine biosynthesis; S-adenosylmethioninamine biosynthesis; S-adenosylmethioninamine from S-adenosyl-L-methionine: step 1/1. Its function is as follows. Catalyzes the decarboxylation of S-adenosylmethionine to S-adenosylmethioninamine (dcAdoMet), the propylamine donor required for the synthesis of the polyamines spermine and spermidine from the diamine putrescine. The sequence is that of S-adenosylmethionine decarboxylase proenzyme from Alkaliphilus metalliredigens (strain QYMF).